The following is a 318-amino-acid chain: Ribose-phosphate pyrophosphokinase 2 (318 aa).

96-101 (RQDKKD) lines the ATP pocket. 4 residues coordinate Mg(2+): D128, H130, D139, and D143. H130 is a binding site for ATP. Residues 212–227 (KDRVAILVDDMADTCG) are binding of phosphoribosylpyrophosphate.

The protein belongs to the ribose-phosphate pyrophosphokinase family. Homodimer. The active form is probably a hexamer composed of 3 homodimers. The cofactor is Mg(2+).

The enzyme catalyses D-ribose 5-phosphate + ATP = 5-phospho-alpha-D-ribose 1-diphosphate + AMP + H(+). Its pathway is metabolic intermediate biosynthesis; 5-phospho-alpha-D-ribose 1-diphosphate biosynthesis; 5-phospho-alpha-D-ribose 1-diphosphate from D-ribose 5-phosphate (route I): step 1/1. Activated by magnesium and inorganic phosphate. Competitively or non-competitively inhibited by ADP, 2,3-bisphosphoglyceride or GDP. Its function is as follows. Catalyzes the synthesis of phosphoribosylpyrophosphate (PRPP) that is essential for nucleotide synthesis. This Xenopus tropicalis (Western clawed frog) protein is Ribose-phosphate pyrophosphokinase 2 (prps2).